We begin with the raw amino-acid sequence, 401 residues long: S-adenosylmethionine synthase (401 aa).

His16 is an ATP binding site. Residue Asp18 participates in Mg(2+) binding. Glu44 is a K(+) binding site. The L-methionine site is built by Glu57 and Gln100. Positions 100–110 are flexible loop; that stretch reads QSPDIAQGVNE. Residues 174–176, 241–242, Asp250, 256–257, Ala273, and Lys277 contribute to the ATP site; these read DAK, RF, and RK. Residue Asp250 participates in L-methionine binding. Lys281 contributes to the L-methionine binding site.

The protein belongs to the AdoMet synthase family. In terms of assembly, homotetramer; dimer of dimers. Mg(2+) is required as a cofactor. It depends on K(+) as a cofactor.

The protein resides in the cytoplasm. The enzyme catalyses L-methionine + ATP + H2O = S-adenosyl-L-methionine + phosphate + diphosphate. It participates in amino-acid biosynthesis; S-adenosyl-L-methionine biosynthesis; S-adenosyl-L-methionine from L-methionine: step 1/1. Catalyzes the formation of S-adenosylmethionine (AdoMet) from methionine and ATP. The overall synthetic reaction is composed of two sequential steps, AdoMet formation and the subsequent tripolyphosphate hydrolysis which occurs prior to release of AdoMet from the enzyme. In Streptococcus equi subsp. zooepidemicus (strain H70), this protein is S-adenosylmethionine synthase.